The sequence spans 633 residues: DNA mismatch repair protein MutL (633 aa).

Residues 338-407 form a disordered region; the sequence is AAPEPERTLP…VPPPTLRAIP (70 aa). Positions 366 to 391 are enriched in low complexity; that stretch reads PGSAFPAAARPAPASSAAQPPLSSSA.

Belongs to the DNA mismatch repair MutL/HexB family.

Its function is as follows. This protein is involved in the repair of mismatches in DNA. It is required for dam-dependent methyl-directed DNA mismatch repair. May act as a 'molecular matchmaker', a protein that promotes the formation of a stable complex between two or more DNA-binding proteins in an ATP-dependent manner without itself being part of a final effector complex. This chain is DNA mismatch repair protein MutL, found in Akkermansia muciniphila (strain ATCC BAA-835 / DSM 22959 / JCM 33894 / BCRC 81048 / CCUG 64013 / CIP 107961 / Muc).